The sequence spans 1183 residues: DNA-directed RNA polymerase subunit beta (1183 aa).

The disordered stretch occupies residues 1155-1183 (ADVDEDDVNEHKVNIQQSSIPESQKETTD).

The protein belongs to the RNA polymerase beta chain family. In terms of assembly, the RNAP catalytic core consists of 2 alpha, 1 beta, 1 beta' and 1 omega subunit. When a sigma factor is associated with the core the holoenzyme is formed, which can initiate transcription.

It catalyses the reaction RNA(n) + a ribonucleoside 5'-triphosphate = RNA(n+1) + diphosphate. DNA-dependent RNA polymerase catalyzes the transcription of DNA into RNA using the four ribonucleoside triphosphates as substrates. This Staphylococcus carnosus (strain TM300) protein is DNA-directed RNA polymerase subunit beta.